We begin with the raw amino-acid sequence, 72 residues long: Neuropeptide IMFamide (72 aa).

Positions 1-24 (MMRFTIGVVCLVAVLLSLAEVSEA) are cleaved as a signal peptide. The residue at position 36 (Phe36) is a Phenylalanine amide. Residues 40-72 (GPTEYDQRGKTFTALCEIATEACQAWFPSTENK) constitute a propeptide that is removed on maturation.

As to expression, expressed in corpora cardiaca (CC), corpora allata (CA), antennal lobe (AL) and gnathal ganglion (GNG) (at protein level). Expression detected in only a few animals (at protein level).

Its subcellular location is the secreted. The chain is Neuropeptide IMFamide from Agrotis ipsilon (Black cutworm moth).